A 215-amino-acid chain; its full sequence is MSDMRRPIIAREGWPFVGALVALAVLALFVHWALGAVLAGLALFVMWFFRDPERPIPREDGLVVSPADGRVMFVREVEEPRFVGGRALLVSIFLSVFDVHINRSPVAGEVTYREYVPGKFLAAWDDTVGEVNERAYLGLVTDGGHRVLVSQVAGLLARRIVTWPAVGDRLDRGQRFGLIRFGSCTQVWLPADSEVLVRPGDRVVAGQTVIGRLPQ.

Residue serine 183 is the Schiff-base intermediate with substrate; via pyruvic acid of the active site. Pyruvic acid (Ser); by autocatalysis is present on serine 183.

Belongs to the phosphatidylserine decarboxylase family. PSD-A subfamily. As to quaternary structure, heterodimer of a large membrane-associated beta subunit and a small pyruvoyl-containing alpha subunit. Pyruvate is required as a cofactor. Is synthesized initially as an inactive proenzyme. Formation of the active enzyme involves a self-maturation process in which the active site pyruvoyl group is generated from an internal serine residue via an autocatalytic post-translational modification. Two non-identical subunits are generated from the proenzyme in this reaction, and the pyruvate is formed at the N-terminus of the alpha chain, which is derived from the carboxyl end of the proenzyme. The post-translation cleavage follows an unusual pathway, termed non-hydrolytic serinolysis, in which the side chain hydroxyl group of the serine supplies its oxygen atom to form the C-terminus of the beta chain, while the remainder of the serine residue undergoes an oxidative deamination to produce ammonia and the pyruvoyl prosthetic group on the alpha chain.

The protein resides in the cell membrane. The catalysed reaction is a 1,2-diacyl-sn-glycero-3-phospho-L-serine + H(+) = a 1,2-diacyl-sn-glycero-3-phosphoethanolamine + CO2. The protein operates within phospholipid metabolism; phosphatidylethanolamine biosynthesis; phosphatidylethanolamine from CDP-diacylglycerol: step 2/2. In terms of biological role, catalyzes the formation of phosphatidylethanolamine (PtdEtn) from phosphatidylserine (PtdSer). The protein is Phosphatidylserine decarboxylase proenzyme of Symbiobacterium thermophilum (strain DSM 24528 / JCM 14929 / IAM 14863 / T).